An 85-amino-acid polypeptide reads, in one-letter code: Phosphocarrier protein HPr (85 aa).

One can recognise an HPr domain in the interval 1-85 (MFQQEVTITA…HLVKLMAELE (85 aa)). The Pros-phosphohistidine intermediate role is filled by His-15.

It is found in the cytoplasm. In terms of biological role, general (non sugar-specific) component of the phosphoenolpyruvate-dependent sugar phosphotransferase system (sugar PTS). This major carbohydrate active-transport system catalyzes the phosphorylation of incoming sugar substrates concomitantly with their translocation across the cell membrane. The phosphoryl group from phosphoenolpyruvate (PEP) is transferred to the phosphoryl carrier protein HPr by enzyme I. Phospho-HPr then transfers it to the PTS EIIA domain. In Klebsiella pneumoniae, this protein is Phosphocarrier protein HPr (ptsH).